We begin with the raw amino-acid sequence, 309 residues long: Homoserine kinase (309 aa).

ATP is bound at residue 91 to 101; that stretch reads PIGSGLGSSAC.

This sequence belongs to the GHMP kinase family. Homoserine kinase subfamily.

The protein localises to the cytoplasm. It carries out the reaction L-homoserine + ATP = O-phospho-L-homoserine + ADP + H(+). Its pathway is amino-acid biosynthesis; L-threonine biosynthesis; L-threonine from L-aspartate: step 4/5. Functionally, catalyzes the ATP-dependent phosphorylation of L-homoserine to L-homoserine phosphate. This chain is Homoserine kinase, found in Erwinia tasmaniensis (strain DSM 17950 / CFBP 7177 / CIP 109463 / NCPPB 4357 / Et1/99).